The chain runs to 289 residues: Elongation factor Ts (289 aa).

The interval 80–83 is involved in Mg(2+) ion dislocation from EF-Tu; it reads TDFV.

The protein belongs to the EF-Ts family.

It localises to the cytoplasm. In terms of biological role, associates with the EF-Tu.GDP complex and induces the exchange of GDP to GTP. It remains bound to the aminoacyl-tRNA.EF-Tu.GTP complex up to the GTP hydrolysis stage on the ribosome. The protein is Elongation factor Ts of Francisella tularensis subsp. holarctica (strain LVS).